The sequence spans 551 residues: Probable malate:quinone oxidoreductase (551 aa).

Low complexity predominate over residues 525 to 544 (QTAAAAPQAQPQLKPQPDAK). The tract at residues 525 to 551 (QTAAAAPQAQPQLKPQPDAKPVADIAL) is disordered.

Belongs to the MQO family. FAD is required as a cofactor.

It carries out the reaction (S)-malate + a quinone = a quinol + oxaloacetate. It participates in carbohydrate metabolism; tricarboxylic acid cycle; oxaloacetate from (S)-malate (quinone route): step 1/1. This is Probable malate:quinone oxidoreductase from Enterobacter sp. (strain 638).